The sequence spans 113 residues: DNA-directed RNA polymerase subunit Rpo4 (113 aa).

The protein belongs to the eukaryotic RPB4 RNA polymerase subunit family. In terms of assembly, part of the 13-subunit RNA polymerase complex. Forms a stalk with Rpo7 that extends from the main structure.

The protein resides in the cytoplasm. It carries out the reaction RNA(n) + a ribonucleoside 5'-triphosphate = RNA(n+1) + diphosphate. Functionally, DNA-dependent RNA polymerase (RNAP) catalyzes the transcription of DNA into RNA using the four ribonucleoside triphosphates as substrates. This subunit is less well bound than the others. In Saccharolobus solfataricus (strain ATCC 35092 / DSM 1617 / JCM 11322 / P2) (Sulfolobus solfataricus), this protein is DNA-directed RNA polymerase subunit Rpo4.